The chain runs to 256 residues: MVALRLIPCLDVANGRVVKGVNFVNLRDSGDPVELACRYSDEGADELVFLDIRASVENRNTLVNLVSRTAKSVKIPFTVGGGIDSVSSINDLLRAGADKVSLNSSAVINPDLISESSREFGNQCIVIAIDARRKVDKVGEWEVYVKGGRENTGIDVLSWAKKVEELGAGEILLTSMDGDGTQNGYDLHLTESVANIVDIPVIASGGAGSLEDIYDVFKEGRASAALLASLLHDKKLTLKEIKTFLLEKKLPIRPYE.

Active-site residues include Asp11 and Asp130.

This sequence belongs to the HisA/HisF family. In terms of assembly, heterodimer of HisH and HisF.

It is found in the cytoplasm. It catalyses the reaction 5-[(5-phospho-1-deoxy-D-ribulos-1-ylimino)methylamino]-1-(5-phospho-beta-D-ribosyl)imidazole-4-carboxamide + L-glutamine = D-erythro-1-(imidazol-4-yl)glycerol 3-phosphate + 5-amino-1-(5-phospho-beta-D-ribosyl)imidazole-4-carboxamide + L-glutamate + H(+). The protein operates within amino-acid biosynthesis; L-histidine biosynthesis; L-histidine from 5-phospho-alpha-D-ribose 1-diphosphate: step 5/9. In terms of biological role, IGPS catalyzes the conversion of PRFAR and glutamine to IGP, AICAR and glutamate. The HisF subunit catalyzes the cyclization activity that produces IGP and AICAR from PRFAR using the ammonia provided by the HisH subunit. The sequence is that of Imidazole glycerol phosphate synthase subunit HisF from Prochlorococcus marinus (strain MIT 9215).